Here is a 509-residue protein sequence, read N- to C-terminus: Putative aldehyde dehydrogenase family 7 member A1 homolog (509 aa).

Position 244–249 (244–249) interacts with NAD(+); the sequence is GSTEVG. The Proton acceptor role is filled by Glu-266. The active-site Nucleophile is the Cys-300.

This sequence belongs to the aldehyde dehydrogenase family. Homotetramer.

The enzyme catalyses an aldehyde + NAD(+) + H2O = a carboxylate + NADH + 2 H(+). This chain is Putative aldehyde dehydrogenase family 7 member A1 homolog, found in Dictyostelium discoideum (Social amoeba).